The following is a 115-amino-acid chain: General stress protein 17M (115 aa).

This chain is General stress protein 17M (yflT), found in Bacillus subtilis (strain 168).